We begin with the raw amino-acid sequence, 274 residues long: tRNA pseudouridine synthase A (274 aa).

Aspartate 54 functions as the Nucleophile in the catalytic mechanism. Tyrosine 112 contributes to the substrate binding site.

Belongs to the tRNA pseudouridine synthase TruA family. In terms of assembly, homodimer.

It carries out the reaction uridine(38/39/40) in tRNA = pseudouridine(38/39/40) in tRNA. In terms of biological role, formation of pseudouridine at positions 38, 39 and 40 in the anticodon stem and loop of transfer RNAs. In Solidesulfovibrio magneticus (strain ATCC 700980 / DSM 13731 / RS-1) (Desulfovibrio magneticus), this protein is tRNA pseudouridine synthase A.